Consider the following 346-residue polypeptide: Porphobilinogen deaminase (346 aa).

Cys242 carries the S-(dipyrrolylmethanemethyl)cysteine modification. Residues Ala317–Gln346 are disordered. Residues Asp335–Gln346 show a composition bias toward polar residues.

Belongs to the HMBS family. In terms of assembly, monomer. It depends on dipyrromethane as a cofactor.

The enzyme catalyses 4 porphobilinogen + H2O = hydroxymethylbilane + 4 NH4(+). Its pathway is porphyrin-containing compound metabolism; protoporphyrin-IX biosynthesis; coproporphyrinogen-III from 5-aminolevulinate: step 2/4. In terms of biological role, tetrapolymerization of the monopyrrole PBG into the hydroxymethylbilane pre-uroporphyrinogen in several discrete steps. The polypeptide is Porphobilinogen deaminase (Nocardia farcinica (strain IFM 10152)).